A 200-amino-acid chain; its full sequence is LHFPL tetraspan subfamily member 6 protein (200 aa).

The N-terminal stretch at 1–23 (MASSLTCTGVIWALLSFLSAATS) is a signal peptide. The next 3 membrane-spanning stretches (helical) occupy residues 84–104 (ICTI…LTAL), 123–143 (GIQF…PLGW), and 166–186 (IGWA…LCTW).

This sequence belongs to the LHFP family.

Its subcellular location is the membrane. The polypeptide is LHFPL tetraspan subfamily member 6 protein (Mus musculus (Mouse)).